The following is a 270-amino-acid chain: 3-methyl-2-oxobutanoate hydroxymethyltransferase (270 aa).

The Mg(2+) site is built by Asp50 and Asp89. 3-methyl-2-oxobutanoate is bound by residues 50–51 (DS), Asp89, and Lys118. Glu120 is a Mg(2+) binding site. Glu187 acts as the Proton acceptor in catalysis.

This sequence belongs to the PanB family. In terms of assembly, homodecamer; pentamer of dimers. It depends on Mg(2+) as a cofactor.

The protein resides in the cytoplasm. It carries out the reaction 3-methyl-2-oxobutanoate + (6R)-5,10-methylene-5,6,7,8-tetrahydrofolate + H2O = 2-dehydropantoate + (6S)-5,6,7,8-tetrahydrofolate. The protein operates within cofactor biosynthesis; (R)-pantothenate biosynthesis; (R)-pantoate from 3-methyl-2-oxobutanoate: step 1/2. Its function is as follows. Catalyzes the reversible reaction in which hydroxymethyl group from 5,10-methylenetetrahydrofolate is transferred onto alpha-ketoisovalerate to form ketopantoate. The protein is 3-methyl-2-oxobutanoate hydroxymethyltransferase of Helicobacter pylori (strain P12).